The primary structure comprises 136 residues: MPEKMSLRLVPHLACIIFILEIQFRIADSNDPCPHNQGIDEDIAESILGDWPANVDLTSVKRSHKCYVTCILQYYNIVTTSGEIFLDKYYDTGVIDELAVAPKINRCRYEFRMETDYCSRIFAIFNCLRQEILTKS.

Positions 1–29 are cleaved as a signal peptide; that stretch reads MPEKMSLRLVPHLACIIFILEIQFRIADS. 3 disulfides stabilise this stretch: Cys33–Cys70, Cys66–Cys118, and Cys107–Cys127.

It belongs to the PBP/GOBP family.

Its function is as follows. Present in the aqueous fluid surrounding olfactory sensory dendrites and are thought to aid in the capture and transport of hydrophobic odorants into and through this fluid. This is General odorant-binding protein 57d from Drosophila melanogaster (Fruit fly).